A 714-amino-acid polypeptide reads, in one-letter code: Hormonally up-regulated neu tumor-associated kinase (714 aa).

Residues 1-16 (MPAAAGDGLLGEPAAP) are compositionally biased toward low complexity. The tract at residues 1-28 (MPAAAGDGLLGEPAAPGGDGGAEDTTRP) is disordered. The Protein kinase domain occupies 62–320 (LIGSRKLGEG…IQQALANRWL (259 aa)). ATP is bound by residues 68-76 (LGEGSFAKV) and K91. The active-site Proton acceptor is the D186. Positions 624 to 635 (HEEKNSPPKEEG) are enriched in basic and acidic residues. Disordered regions lie at residues 624 to 658 (HEEKNSPPKEEGVCSPPPVPSNGLLQPLGSPNCVK) and 674 to 714 (KRHQ…KGQC). The span at 692–703 (SPLQPTAPSSLS) shows a compositional bias: polar residues.

It belongs to the protein kinase superfamily. CAMK Ser/Thr protein kinase family. SNF1 subfamily.

The enzyme catalyses L-seryl-[protein] + ATP = O-phospho-L-seryl-[protein] + ADP + H(+). It carries out the reaction L-threonyl-[protein] + ATP = O-phospho-L-threonyl-[protein] + ADP + H(+). This Mus musculus (Mouse) protein is Hormonally up-regulated neu tumor-associated kinase (Hunk).